Here is a 313-residue protein sequence, read N- to C-terminus: MEKRKIILDCEPGHDDAIAMMMAAKHPAIDLLGITIVAGNQTLDKTLINGLNVCQKLEINVPVYAGMPQPIMRKQIVADNIHGETGLDGPVFEPLTRQAESTHAVKYIIDTLMASDGDITLVPVGPLSNIAVAMRMQPAILPKIREIVLMGGAYGTGNFTPSAEFNIFADPEAARVVFTSGVPLVMMGLDLTNQTVCTPDVIARMERVGGPAGELFSDIMNFTLKTQFEYYGLAGGPVHDATCIGYLINPDGIKTQDMYVEVDVNSGPCYGRTVCDELGVLGKPANTKVGITIDTDWFWGLVEECVRGYIKTH.

Residue Glu11 is the Proton acceptor of the active site. Ca(2+) is bound by residues Glu11, Asp16, and Val124. Residues Gln227 and His239 each coordinate substrate. Residue Asp240 participates in Ca(2+) binding.

It belongs to the IUNH family. RihB subfamily. In terms of assembly, homotetramer. Ca(2+) serves as cofactor.

The catalysed reaction is a pyrimidine ribonucleoside + H2O = a pyrimidine nucleobase + D-ribose. Its function is as follows. Hydrolyzes cytidine or uridine to ribose and cytosine or uracil, respectively. Has a clear preference for cytidine over uridine. Strictly specific for ribonucleosides. This Shigella flexneri serotype 5b (strain 8401) protein is Pyrimidine-specific ribonucleoside hydrolase RihB.